We begin with the raw amino-acid sequence, 114 residues long: MHEITLSQRALEIIEQQAQQAGARRVTGVWLKVGAFSCVEASALTFCFELVCRGTLAEGCELHIAEQQAECWCERCQQYVHLVSQHVRRCPLCNNDQLQIVADDGLQIQRLELE.

Residue H2 coordinates Ni(2+). Positions 73, 76, 90, and 93 each coordinate Zn(2+).

This sequence belongs to the HypA/HybF family.

Its function is as follows. Involved in the maturation of [NiFe] hydrogenases. Required for nickel insertion into the metal center of the hydrogenase. This is Hydrogenase maturation factor HypA from Klebsiella pneumoniae (strain 342).